The primary structure comprises 156 residues: Deoxyuridine 5'-triphosphate nucleotidohydrolase (156 aa).

Substrate-binding positions include 76–78 (RSG), N89, 93–95 (TVD), and K103.

This sequence belongs to the dUTPase family. Mg(2+) is required as a cofactor.

It carries out the reaction dUTP + H2O = dUMP + diphosphate + H(+). Its pathway is pyrimidine metabolism; dUMP biosynthesis; dUMP from dCTP (dUTP route): step 2/2. In terms of biological role, this enzyme is involved in nucleotide metabolism: it produces dUMP, the immediate precursor of thymidine nucleotides and it decreases the intracellular concentration of dUTP so that uracil cannot be incorporated into DNA. This Rhizobium johnstonii (strain DSM 114642 / LMG 32736 / 3841) (Rhizobium leguminosarum bv. viciae) protein is Deoxyuridine 5'-triphosphate nucleotidohydrolase.